The chain runs to 392 residues: Na(+)/H(+) antiporter NhaA 2 (392 aa).

Helical transmembrane passes span Phe20 to Ile40, Val63 to Ile83, Ala99 to Phe119, Ile127 to Leu147, Ile158 to Phe178, Ser181 to Leu201, Leu209 to His229, Val265 to Ile285, Val298 to Ile318, Gly336 to Phe356, and Glu365 to Leu385.

This sequence belongs to the NhaA Na(+)/H(+) (TC 2.A.33) antiporter family.

The protein resides in the cell inner membrane. The catalysed reaction is Na(+)(in) + 2 H(+)(out) = Na(+)(out) + 2 H(+)(in). Functionally, na(+)/H(+) antiporter that extrudes sodium in exchange for external protons. This chain is Na(+)/H(+) antiporter NhaA 2, found in Pseudomonas savastanoi pv. phaseolicola (strain 1448A / Race 6) (Pseudomonas syringae pv. phaseolicola (strain 1448A / Race 6)).